A 221-amino-acid chain; its full sequence is Proteasome subunit beta type-1 (221 aa).

Belongs to the peptidase T1B family. As to quaternary structure, the 26S proteasome consists of a 20S proteasome core and two 19S regulatory subunits. The 20S proteasome core is composed of 28 subunits that are arranged in four stacked rings, resulting in a barrel-shaped structure. The two end rings are each formed by seven alpha subunits, and the two central rings are each formed by seven beta subunits. The catalytic chamber with the active sites is on the inside of the barrel.

The protein localises to the cytoplasm. Its subcellular location is the nucleus. Non-catalytic component of the proteasome, a multicatalytic proteinase complex which is characterized by its ability to cleave peptides with Arg, Phe, Tyr, Leu, and Glu adjacent to the leaving group at neutral or slightly basic pH. The proteasome has an ATP-dependent proteolytic activity. In Oryza sativa subsp. japonica (Rice), this protein is Proteasome subunit beta type-1 (PBF1).